A 147-amino-acid polypeptide reads, in one-letter code: UPF0216 protein MK1676 (147 aa).

Belongs to the UPF0216 family.

This chain is UPF0216 protein MK1676, found in Methanopyrus kandleri (strain AV19 / DSM 6324 / JCM 9639 / NBRC 100938).